Reading from the N-terminus, the 369-residue chain is Velvet complex subunit B (369 aa).

3 disordered regions span residues 1–54, 138–174, and 346–369; these read MYAV…STVH, SISTAMSSSYPPPPHPTSSDYPASYQTNPYGQPVGQP, and KDGVKGQGSRGRHSDEDDGLDNEY. Positions 13–27 are enriched in pro residues; that stretch reads HPPPLSMDRIPPPST. Residues 53–345 form the Velvet domain; sequence VHDGRIWSLQ…ANQGIKIPIR (293 aa).

It belongs to the velvet family. VelB subfamily. In terms of assembly, component of the heterotrimeric velvet complex composed of laeA, veA and velB; VeA acting as a bridging protein between laeA and velB. Interacts directly with veA. Forms a heterodimeric complex with vosA; the formation of the velB-vosA complex is light-dependent.

Its subcellular location is the nucleus. It localises to the cytoplasm. Functionally, component of the velvet transcription factor complex that controls sexual/asexual developmental ratio in response to light, promoting sexual development in the darkness while stimulating asexual sporulation under illumination. The velvet complex acts as a global regulator for secondary metabolite gene expression. Component of the velB-VosA heterodimeric complex that plays a dual role in activating genes associated with spore maturation and repressing certain development-associated genes. The velB-VosA complex binds DNA through the DNA-binding domain of vosA that recognizes an 11-nucleotide consensus sequence 5'-CTGGCCGCGGC-3' consisting of two motifs in the promoters of key developmental regulatory genes. The vosA-velB complex binds to the beta-glucan synthase fksA gene promoter in asexual spores for repression. The polypeptide is Velvet complex subunit B (Emericella nidulans (strain FGSC A4 / ATCC 38163 / CBS 112.46 / NRRL 194 / M139) (Aspergillus nidulans)).